Reading from the N-terminus, the 277-residue chain is Inositol monophosphatase 1 (277 aa).

Residues Glu-70, Asp-90, Ile-92, and Asp-93 each coordinate Mg(2+). Glu-70 contributes to the substrate binding site. 92-95 is a substrate binding site; sequence IDGT. The residue at position 168 (Thr-168) is a Phosphothreonine. Substrate is bound by residues 194-196, Glu-213, and Asp-220; that span reads GTA. Position 220 (Asp-220) interacts with Mg(2+).

This sequence belongs to the inositol monophosphatase superfamily. Homodimer. The cofactor is Mg(2+).

It is found in the cytoplasm. It catalyses the reaction a myo-inositol phosphate + H2O = myo-inositol + phosphate. The enzyme catalyses 1D-myo-inositol 1-phosphate + H2O = myo-inositol + phosphate. The catalysed reaction is 1D-myo-inositol 2-phosphate + H2O = myo-inositol + phosphate. It carries out the reaction 1D-myo-inositol 3-phosphate + H2O = myo-inositol + phosphate. It catalyses the reaction 1D-myo-inositol 4-phosphate + H2O = myo-inositol + phosphate. The enzyme catalyses 1D-myo-inositol 5-phosphate + H2O = myo-inositol + phosphate. The catalysed reaction is 1D-myo-inositol 6-phosphate + H2O = myo-inositol + phosphate. It carries out the reaction scyllo-inositol 1-phosphate + H2O = scyllo-inositol + phosphate. It catalyses the reaction alpha-D-galactose 1-phosphate + H2O = D-galactose + phosphate. The enzyme catalyses alpha-D-glucose 1-phosphate + H2O = D-glucose + phosphate. The catalysed reaction is D-glucose 6-phosphate + H2O = D-glucose + phosphate. It carries out the reaction beta-D-fructose 1-phosphate + H2O = D-fructose + phosphate. It catalyses the reaction glycerol 2-phosphate + H2O = glycerol + phosphate. The enzyme catalyses adenosine 2'-phosphate + H2O = adenosine + phosphate. The protein operates within polyol metabolism; myo-inositol biosynthesis; myo-inositol from D-glucose 6-phosphate: step 2/2. With respect to regulation, inhibited by Li(+), Ca(2+) and Mn(2+), but also by Mg(2+) at concentrations above 3 mM. Phosphatase involved in the dephosphorylation of myo-inositol monophosphate to generate myo-inositol. Is also able to dephosphorylate scyllo-inositol-phosphate, myo-inositol 1,4-diphosphate, scyllo-inositol-1,3-diphosphate and scyllo-inositol-1,4-diphosphate. Also dephosphorylates in vitro other sugar-phosphates including D-galactose-1-phosphate, glucose-1-phosphate, glucose-6-phosphate, fructose-1-phosphate, beta-glycerophosphate and 2'-AMP. Responsible for the provision of inositol required for synthesis of phosphatidylinositol and polyphosphoinositides, and involved in maintaining normal brain function. Has been implicated as the pharmacological target for lithium Li(+) action in brain. The chain is Inositol monophosphatase 1 (IMPA1) from Sus scrofa (Pig).